The sequence spans 368 residues: Cobalt-precorrin-5B C(1)-methyltransferase (368 aa).

It belongs to the CbiD family.

The catalysed reaction is Co-precorrin-5B + S-adenosyl-L-methionine = Co-precorrin-6A + S-adenosyl-L-homocysteine. It participates in cofactor biosynthesis; adenosylcobalamin biosynthesis; cob(II)yrinate a,c-diamide from sirohydrochlorin (anaerobic route): step 6/10. Functionally, catalyzes the methylation of C-1 in cobalt-precorrin-5B to form cobalt-precorrin-6A. This is Cobalt-precorrin-5B C(1)-methyltransferase from Brucella ovis (strain ATCC 25840 / 63/290 / NCTC 10512).